The primary structure comprises 476 residues: Cytoplasmic 60S subunit biogenesis factor ZNF622 (476 aa).

Ala-2 is modified (N-acetylalanine). U1-type zinc fingers lie at residues 4–28 and 69–93; these read LTCI…TDWH and TYCT…SRRH. The interval 137-243 is disordered; sequence AIKAQPSTSP…AEDAAAEESP (107 aa). The span at 167 to 177 shows a compositional bias: basic and acidic residues; sequence VPERDPTEKPP. The span at 195 to 239 shows a compositional bias: acidic residues; sequence EDGEEEGEEEEEDDEDEDWEDIDSDDGLECEDPGVEDQDAEDAAA. The residue at position 275 (Ser-275) is a Phosphoserine.

This sequence belongs to the REI1 family. In terms of assembly, homo- and heterodimer. Associates with pre-60S ribosomal particles. Interacts with MELK and MYBL2. Interacts with DNAJC21. In terms of processing, phosphorylated by MELK. The phosphorylation may redirect the protein to the nucleus. Ubiquitinated by HECTD1, leading to its degradation.

The protein resides in the cytoplasm. The protein localises to the nucleus. Its function is as follows. Pre-60S-associated cytoplasmic factor involved in the cytoplasmic maturation of the 60S subunit. The chain is Cytoplasmic 60S subunit biogenesis factor ZNF622 (Znf622) from Mus musculus (Mouse).